The primary structure comprises 185 residues: Elongation factor P (185 aa).

Belongs to the elongation factor P family.

The protein resides in the cytoplasm. The protein operates within protein biosynthesis; polypeptide chain elongation. Its function is as follows. Involved in peptide bond synthesis. Stimulates efficient translation and peptide-bond synthesis on native or reconstituted 70S ribosomes in vitro. Probably functions indirectly by altering the affinity of the ribosome for aminoacyl-tRNA, thus increasing their reactivity as acceptors for peptidyl transferase. This is Elongation factor P from Desulforudis audaxviator (strain MP104C).